The sequence spans 69 residues: Cytochrome c oxidase subunit 8A, mitochondrial (69 aa).

A mitochondrion-targeting transit peptide spans 1–25 (MSVLTPLLLRGLTGSARRLPVLRAQ). An SIFI-degron motif is present at residues 2-19 (SVLTPLLLRGLTGSARRL). Residues 26–36 (VHSKPPREKLG) lie on the Mitochondrial matrix side of the membrane. The chain crosses the membrane as a helical span at residues 37-60 (TMDVAIGLTSCFVCFLLPSGWVLS). The Mitochondrial intermembrane segment spans residues 61–69 (HLETYKKRE).

The protein belongs to the cytochrome c oxidase VIII family. As to quaternary structure, component of the cytochrome c oxidase (complex IV, CIV), a multisubunit enzyme composed of 14 subunits. The complex is composed of a catalytic core of 3 subunits MT-CO1, MT-CO2 and MT-CO3, encoded in the mitochondrial DNA, and 11 supernumerary subunits COX4I, COX5A, COX5B, COX6A, COX6B, COX6C, COX7A, COX7B, COX7C, COX8 and NDUFA4, which are encoded in the nuclear genome. The complex exists as a monomer or a dimer and forms supercomplexes (SCs) in the inner mitochondrial membrane with NADH-ubiquinone oxidoreductase (complex I, CI) and ubiquinol-cytochrome c oxidoreductase (cytochrome b-c1 complex, complex III, CIII), resulting in different assemblies (supercomplex SCI(1)III(2)IV(1) and megacomplex MCI(2)III(2)IV(2)). In terms of processing, in response to mitochondrial stress, the precursor protein is ubiquitinated by the SIFI complex in the cytoplasm before mitochondrial import, leading to its degradation. Within the SIFI complex, UBR4 initiates ubiquitin chain that are further elongated or branched by KCMF1.

Its subcellular location is the mitochondrion inner membrane. Its pathway is energy metabolism; oxidative phosphorylation. Component of the cytochrome c oxidase, the last enzyme in the mitochondrial electron transport chain which drives oxidative phosphorylation. The respiratory chain contains 3 multisubunit complexes succinate dehydrogenase (complex II, CII), ubiquinol-cytochrome c oxidoreductase (cytochrome b-c1 complex, complex III, CIII) and cytochrome c oxidase (complex IV, CIV), that cooperate to transfer electrons derived from NADH and succinate to molecular oxygen, creating an electrochemical gradient over the inner membrane that drives transmembrane transport and the ATP synthase. Cytochrome c oxidase is the component of the respiratory chain that catalyzes the reduction of oxygen to water. Electrons originating from reduced cytochrome c in the intermembrane space (IMS) are transferred via the dinuclear copper A center (CU(A)) of subunit 2 and heme A of subunit 1 to the active site in subunit 1, a binuclear center (BNC) formed by heme A3 and copper B (CU(B)). The BNC reduces molecular oxygen to 2 water molecules using 4 electrons from cytochrome c in the IMS and 4 protons from the mitochondrial matrix. In Eulemur fulvus fulvus (Brown lemur), this protein is Cytochrome c oxidase subunit 8A, mitochondrial (COX8A).